The following is a 144-amino-acid chain: Mercuric transport protein MerC (144 aa).

Over 1-21 the chain is Cytoplasmic; it reads MSAITRIIDKIGIVGTIVGSF. Residues 22–42 form a helical membrane-spanning segment; that stretch reads SCAMCFPAAASLGAAIGLGFL. Hg(2+) contacts are provided by cysteine 23 and cysteine 26. Over 43 to 46 the chain is Periplasmic; sequence SQWE. The helical transmembrane segment at 47-67 threads the bilayer; the sequence is GLFVQWLIPIFASVALLATLA. Residues 68-78 lie on the Cytoplasmic side of the membrane; it reads GWFSHRQWQRT. A helical membrane pass occupies residues 79 to 99; that stretch reads LLGSIGPVLALVGVFGLTHHF. Residues 100–103 lie on the Periplasmic side of the membrane; it reads LDKD. The helical transmembrane segment at 104 to 124 threads the bilayer; that stretch reads LARVIFYTGLVVMFLVSIWDM. Residues 125–144 lie on the Cytoplasmic side of the membrane; the sequence is VNPANRRCATDGCETPAPRS.

Monomer.

Its subcellular location is the cell inner membrane. Its activity is regulated as follows. Inhibited by the thiol-modifying reagent N-ethylmaleimide (NEM). In terms of biological role, involved in mercuric ion uptake. The chain is Mercuric transport protein MerC from Acidithiobacillus ferrooxidans (Thiobacillus ferrooxidans).